Reading from the N-terminus, the 71-residue chain is UPF0352 protein Spea_1764 (71 aa).

It belongs to the UPF0352 family.

This Shewanella pealeana (strain ATCC 700345 / ANG-SQ1) protein is UPF0352 protein Spea_1764.